We begin with the raw amino-acid sequence, 116 residues long: UPF0102 protein Sala_0262 (116 aa).

It belongs to the UPF0102 family.

In Sphingopyxis alaskensis (strain DSM 13593 / LMG 18877 / RB2256) (Sphingomonas alaskensis), this protein is UPF0102 protein Sala_0262.